The chain runs to 900 residues: Protein translocase subunit SecA (900 aa).

ATP-binding positions include Q87, 105 to 109, and D510; that span reads GEGKT. Residues 857 to 890 are disordered; the sequence is DSLDSLSDGGSDSADGQEYPKVGRNEPCPCGSGK. A compositionally biased stretch (low complexity) spans 860–872; the sequence is DSLSDGGSDSADG. Zn(2+)-binding residues include C884, C886, C895, and H896.

The protein belongs to the SecA family. In terms of assembly, monomer and homodimer. Part of the essential Sec protein translocation apparatus which comprises SecA, SecYEG and auxiliary proteins SecDF-YajC and YidC. Zn(2+) is required as a cofactor.

The protein localises to the cell inner membrane. It localises to the cytoplasm. It catalyses the reaction ATP + H2O + cellular proteinSide 1 = ADP + phosphate + cellular proteinSide 2.. Its function is as follows. Part of the Sec protein translocase complex. Interacts with the SecYEG preprotein conducting channel. Has a central role in coupling the hydrolysis of ATP to the transfer of proteins into and across the cell membrane, serving both as a receptor for the preprotein-SecB complex and as an ATP-driven molecular motor driving the stepwise translocation of polypeptide chains across the membrane. The protein is Protein translocase subunit SecA of Marinomonas sp. (strain MWYL1).